Reading from the N-terminus, the 874-residue chain is Alanine--tRNA ligase (874 aa).

Residues His-562, His-566, Cys-663, and His-667 each coordinate Zn(2+).

This sequence belongs to the class-II aminoacyl-tRNA synthetase family. The cofactor is Zn(2+).

The protein localises to the cytoplasm. The catalysed reaction is tRNA(Ala) + L-alanine + ATP = L-alanyl-tRNA(Ala) + AMP + diphosphate. Catalyzes the attachment of alanine to tRNA(Ala) in a two-step reaction: alanine is first activated by ATP to form Ala-AMP and then transferred to the acceptor end of tRNA(Ala). Also edits incorrectly charged Ser-tRNA(Ala) and Gly-tRNA(Ala) via its editing domain. The protein is Alanine--tRNA ligase of Bordetella bronchiseptica (strain ATCC BAA-588 / NCTC 13252 / RB50) (Alcaligenes bronchisepticus).